The primary structure comprises 1433 residues: Probable ATP-dependent RNA helicase spindle-E (1433 aa).

Residues 76 to 98 (NRTLDELDSDDEEENMQEQPSVR) are disordered. Residues 81–91 (ELDSDDEEENM) show a composition bias toward acidic residues. Residues 127–294 (MKAIRENPVV…FATSSAFPPV (168 aa)) form the Helicase ATP-binding domain. 140-147 (GETGCGKT) contacts ATP. The DEAH box motif lies at 240–243 (DEVH). The Helicase C-terminal domain occupies 354–526 (QSLQSYEEAK…NSVLKAKELE (173 aa)). The Tudor domain occupies 937–1000 (ASAVTKGLQL…RLMPHELKRD (64 aa)).

This sequence belongs to the DEAD box helicase family. DEAH subfamily.

It is found in the cytoplasm. The catalysed reaction is ATP + H2O = ADP + phosphate + H(+). Functionally, probable ATP-binding RNA helicase which plays a central role during spermatogenesis and oogenesis by repressing transposable elements and preventing their mobilization, which is essential for the germline integrity. Acts via the piRNA metabolic process, which mediates the repression of transposable elements during meiosis by forming complexes composed of piRNAs and Piwi and govern the methylation and subsequent repression of transposons. Involved in the repression of LTR retrotransposon copia. Also involved in telomere regulation by repressing specialized telomeric retroelements HeT-A, TAHRE, and TART; Drosophila telomeres being maintained by transposition of specialized telomeric retroelements. Involved in telomeric trans-silencing, a repression mechanism by which a transposon or a transgene inserted in subtelomeric heterochromatin has the capacity to repress in trans in the female germline, a homologous transposon, or transgene located in euchromatin. Involved in the repression of testis-expressed Stellate genes by the homologous Su(Ste) repeats. Required for anteroposterior and dorsoventral axis formation during oogenesis. In Drosophila virilis (Fruit fly), this protein is Probable ATP-dependent RNA helicase spindle-E (spn-E).